The following is a 548-amino-acid chain: Thermosome subunit alpha (548 aa).

The disordered stretch occupies residues 527–548 (TKPEGGQGGGMPGGMGGMDMGM). A compositionally biased stretch (gly residues) spans 531 to 548 (GGQGGGMPGGMGGMDMGM).

This sequence belongs to the TCP-1 chaperonin family. As to quaternary structure, forms a Heterooligomeric complex of two stacked eight-membered rings.

Functionally, molecular chaperone; binds unfolded polypeptides in vitro, and has a weak ATPase activity. The chain is Thermosome subunit alpha (thsA) from Thermococcus sp. (strain JCM 11816 / KS-1).